Reading from the N-terminus, the 485-residue chain is D-alanine--D-alanyl carrier protein ligase (485 aa).

ATP is bound at residue 144-145; that stretch reads TS. Aspartate 189 is a binding site for D-alanine. 284–289 is an ATP binding site; it reads NTYGPT. Position 293 (valine 293) interacts with D-alanine. ATP contacts are provided by aspartate 365 and lysine 473. Residue lysine 473 coordinates D-alanine.

It belongs to the ATP-dependent AMP-binding enzyme family. DltA subfamily.

It is found in the cytoplasm. The enzyme catalyses holo-[D-alanyl-carrier protein] + D-alanine + ATP = D-alanyl-[D-alanyl-carrier protein] + AMP + diphosphate. It participates in cell wall biogenesis; lipoteichoic acid biosynthesis. In terms of biological role, catalyzes the first step in the D-alanylation of lipoteichoic acid (LTA), the activation of D-alanine and its transfer onto the D-alanyl carrier protein (Dcp) DltC. In an ATP-dependent two-step reaction, forms a high energy D-alanyl-AMP intermediate, followed by transfer of the D-alanyl residue as a thiol ester to the phosphopantheinyl prosthetic group of the Dcp. D-alanylation of LTA plays an important role in modulating the properties of the cell wall in Gram-positive bacteria, influencing the net charge of the cell wall. In Staphylococcus haemolyticus (strain JCSC1435), this protein is D-alanine--D-alanyl carrier protein ligase.